Here is a 382-residue protein sequence, read N- to C-terminus: Kelch domain-containing protein 3 (382 aa).

Kelch repeat units follow at residues 25 to 77 (RVYS…PYMR), 88 to 138 (TVFL…VLGK), 139 to 189 (IMYI…TMLG), 191 to 249 (HMYV…GYNG), and 251 to 301 (LYIF…IVGD).

Component of a CRL2(KLHDC3) complex, also named ECS(KLHDC3) complex, composed of CUL2, Elongin BC (ELOB and ELOC), RBX1 and substrate-specific adapter KLHDC3. May form oligomers as a KLHDC3-ELOB-ELOC complex; this interaction is likely autoinhibitory for the E3 ligase complex.

Its subcellular location is the cytoplasm. Its pathway is protein modification; protein ubiquitination. In terms of biological role, substrate-recognition component of a Cul2-RING (CRL2) E3 ubiquitin-protein ligase complex of the DesCEND (destruction via C-end degrons) pathway, which recognizes a C-degron located at the extreme C terminus of target proteins, leading to their ubiquitination and degradation. The C-degron recognized by the DesCEND pathway is usually a motif of less than ten residues and can be present in full-length proteins, truncated proteins or proteolytically cleaved forms. The CRL2(KLHDC3) complex specifically recognizes proteins with a glycine (Gly) at the C-terminus, leading to their ubiquitination and degradation: recognizes the C-terminal -Arg-(Xaa)n-Arg-Gly, -Arg-(Xaa)n-Lys-Gly, and -Arg-(Xaa)n-Gln-Gly degrons. The CRL2(KLHDC3) complex mediates ubiquitination and degradation of truncated SELENOV and SEPHS2 selenoproteins produced by failed UGA/Sec decoding, which end with a glycine. May be involved in meiotic recombination process. The protein is Kelch domain-containing protein 3 of Rattus norvegicus (Rat).